Consider the following 347-residue polypeptide: Tryptophan--tRNA ligase (347 aa).

Residues Gln10–Ser12 and Gly18–Asn19 contribute to the ATP site. The short motif at Ala11–Asn19 is the 'HIGH' region element. Residue Asp140 participates in L-tryptophan binding. ATP-binding positions include Gly152–Asp154, Ile191, and Lys200–Ser204. A 'KMSKS' region motif is present at residues Lys200–Ser204.

Belongs to the class-I aminoacyl-tRNA synthetase family. In terms of assembly, homodimer.

It localises to the cytoplasm. The enzyme catalyses tRNA(Trp) + L-tryptophan + ATP = L-tryptophyl-tRNA(Trp) + AMP + diphosphate + H(+). Its function is as follows. Catalyzes the attachment of tryptophan to tRNA(Trp). The sequence is that of Tryptophan--tRNA ligase from Mycoplasma genitalium (strain ATCC 33530 / DSM 19775 / NCTC 10195 / G37) (Mycoplasmoides genitalium).